The primary structure comprises 89 residues: Small ribosomal subunit protein uS15 (89 aa).

The protein belongs to the universal ribosomal protein uS15 family. Part of the 30S ribosomal subunit. Forms a bridge to the 50S subunit in the 70S ribosome, contacting the 23S rRNA.

Its function is as follows. One of the primary rRNA binding proteins, it binds directly to 16S rRNA where it helps nucleate assembly of the platform of the 30S subunit by binding and bridging several RNA helices of the 16S rRNA. In terms of biological role, forms an intersubunit bridge (bridge B4) with the 23S rRNA of the 50S subunit in the ribosome. The polypeptide is Small ribosomal subunit protein uS15 (Nitratiruptor sp. (strain SB155-2)).